A 139-amino-acid chain; its full sequence is Small ribosomal subunit protein uS11 (139 aa).

Over residues 1–13 (MAKQAAKGSAAAT) the composition is skewed to low complexity. The interval 1–30 (MAKQAAKGSAAATKRQRGKRREKKNVPRGQ) is disordered. Residues 14-23 (KRQRGKRREK) show a composition bias toward basic residues.

Belongs to the universal ribosomal protein uS11 family. In terms of assembly, part of the 30S ribosomal subunit. Interacts with proteins S7 and S18. Binds to IF-3.

In terms of biological role, located on the platform of the 30S subunit, it bridges several disparate RNA helices of the 16S rRNA. Forms part of the Shine-Dalgarno cleft in the 70S ribosome. The protein is Small ribosomal subunit protein uS11 of Roseiflexus sp. (strain RS-1).